Consider the following 258-residue polypeptide: UPF0246 protein YaaA (258 aa).

The protein belongs to the UPF0246 family.

In Escherichia coli O7:K1 (strain IAI39 / ExPEC), this protein is UPF0246 protein YaaA.